The primary structure comprises 88 residues: Small ribosomal subunit protein uS15 (88 aa).

Basic and acidic residues predominate over residues 1–12 (MITQEEQQKIID). Residues 1 to 24 (MITQEEQQKIIDRFGNGPNDTGTP) are disordered.

Belongs to the universal ribosomal protein uS15 family. Part of the 30S ribosomal subunit. Forms a bridge to the 50S subunit in the 70S ribosome, contacting the 23S rRNA.

In terms of biological role, one of the primary rRNA binding proteins, it binds directly to 16S rRNA where it helps nucleate assembly of the platform of the 30S subunit by binding and bridging several RNA helices of the 16S rRNA. Functionally, forms an intersubunit bridge (bridge B4) with the 23S rRNA of the 50S subunit in the ribosome. This is Small ribosomal subunit protein uS15 from Salinibacter ruber (strain DSM 13855 / M31).